The chain runs to 98 residues: NADH-ubiquinone oxidoreductase chain 4L (98 aa).

The next 3 helical transmembrane spans lie at 1–21 (MIPTYMNIMLAFTISLLGMLT), 29–49 (SLLCLEGMMMSLFIMTTLIAL), and 61–81 (IILLVFAACEAAVGLALLVSI).

This sequence belongs to the complex I subunit 4L family. As to quaternary structure, core subunit of respiratory chain NADH dehydrogenase (Complex I) which is composed of 45 different subunits.

It is found in the mitochondrion inner membrane. It carries out the reaction a ubiquinone + NADH + 5 H(+)(in) = a ubiquinol + NAD(+) + 4 H(+)(out). Functionally, core subunit of the mitochondrial membrane respiratory chain NADH dehydrogenase (Complex I) which catalyzes electron transfer from NADH through the respiratory chain, using ubiquinone as an electron acceptor. Part of the enzyme membrane arm which is embedded in the lipid bilayer and involved in proton translocation. The protein is NADH-ubiquinone oxidoreductase chain 4L (MT-ND4L) of Macaca ochreata subsp. brunnescens (Muna-buton macaque).